The following is a 50-amino-acid chain: MAVPKRRVSHTRSAKRRTHYKITLKKPVKDSDGSWKMPHMVNPNTGEYKN.

Residues 1–26 (MAVPKRRVSHTRSAKRRTHYKITLKK) are compositionally biased toward basic residues. Residues 1-50 (MAVPKRRVSHTRSAKRRTHYKITLKKPVKDSDGSWKMPHMVNPNTGEYKN) are disordered.

The protein belongs to the bacterial ribosomal protein bL32 family.

The sequence is that of Large ribosomal subunit protein bL32 from Aliarcobacter butzleri (strain RM4018) (Arcobacter butzleri).